The sequence spans 262 residues: Probable carboxylesterase SOBER1-like (262 aa).

Catalysis depends on charge relay system residues S151, D205, and H237.

Belongs to the AB hydrolase superfamily. AB hydrolase 2 family.

Functionally, carboxylesterase. This is Probable carboxylesterase SOBER1-like from Arabidopsis thaliana (Mouse-ear cress).